A 237-amino-acid polypeptide reads, in one-letter code: Ribosomal RNA small subunit methyltransferase G (237 aa).

S-adenosyl-L-methionine contacts are provided by residues glycine 78, phenylalanine 83, 129–130 (AE), and arginine 148.

Belongs to the methyltransferase superfamily. RNA methyltransferase RsmG family.

The protein localises to the cytoplasm. In terms of biological role, specifically methylates the N7 position of a guanine in 16S rRNA. This is Ribosomal RNA small subunit methyltransferase G from Streptococcus equi subsp. zooepidemicus (strain H70).